The following is a 247-amino-acid chain: E3 ubiquitin-protein ligase RNF182 (247 aa).

Residues 20 to 68 form an RING-type zinc finger; that stretch reads CKICYNRYNLKQRKPKVLECCHRVCAKCLYKIIDFGDSPQGVIVCPFCR. Transmembrane regions (helical) follow at residues 184–204 and 211–231; these read VLVW…IYLL and LGVV…VYGF.

In terms of assembly, interacts with ATP6V0C.

It is found in the membrane. Its subcellular location is the cytoplasm. The enzyme catalyses S-ubiquitinyl-[E2 ubiquitin-conjugating enzyme]-L-cysteine + [acceptor protein]-L-lysine = [E2 ubiquitin-conjugating enzyme]-L-cysteine + N(6)-ubiquitinyl-[acceptor protein]-L-lysine.. It functions in the pathway protein modification; protein ubiquitination. Functionally, E3 ubiquitin-protein ligase that mediates the ubiquitination of ATP6V0C and targets it to degradation via the ubiquitin-proteasome pathway. Also plays a role in the inhibition of TLR-triggered innate immune response by mediating 'Lys'-48-linked ubiquitination and subsequent degradation of NF-kappa-B component RELA. The chain is E3 ubiquitin-protein ligase RNF182 (RNF182) from Ailuropoda melanoleuca (Giant panda).